We begin with the raw amino-acid sequence, 294 residues long: NAD kinase (294 aa).

The active-site Proton acceptor is aspartate 73. NAD(+)-binding positions include 73 to 74 (DG), 147 to 148 (ND), arginine 175, aspartate 177, and 188 to 193 (TAYALS).

It belongs to the NAD kinase family. Requires a divalent metal cation as cofactor.

Its subcellular location is the cytoplasm. The enzyme catalyses NAD(+) + ATP = ADP + NADP(+) + H(+). Its function is as follows. Involved in the regulation of the intracellular balance of NAD and NADP, and is a key enzyme in the biosynthesis of NADP. Catalyzes specifically the phosphorylation on 2'-hydroxyl of the adenosine moiety of NAD to yield NADP. This chain is NAD kinase, found in Nitrosospira multiformis (strain ATCC 25196 / NCIMB 11849 / C 71).